We begin with the raw amino-acid sequence, 221 residues long: MTRVKVCGVTDETDLAAVDAAGADAVGAICDVPVDTPREIPRERARELFAAAPPFLTTTLVTMPDSVDHARDLAREVGPDVLQLHGDFAADDLDSLRATGVGVVPVVDATDLARARDLAPVVDAILVDTPSDSGAGGTGETHDWDASRDLVAAVDAPVILAGGLTPDNVVEAVRTVEPYGVDVASGVEASGGVKDHDAVRAFVAAAKTARGAVDDHEEVVA.

It belongs to the TrpF family.

It catalyses the reaction N-(5-phospho-beta-D-ribosyl)anthranilate = 1-(2-carboxyphenylamino)-1-deoxy-D-ribulose 5-phosphate. It functions in the pathway amino-acid biosynthesis; L-tryptophan biosynthesis; L-tryptophan from chorismate: step 3/5. This is N-(5'-phosphoribosyl)anthranilate isomerase (trpF) from Haloferax volcanii (strain ATCC 29605 / DSM 3757 / JCM 8879 / NBRC 14742 / NCIMB 2012 / VKM B-1768 / DS2) (Halobacterium volcanii).